We begin with the raw amino-acid sequence, 222 residues long: NADH dehydrogenase [ubiquinone] iron-sulfur protein 8-A, mitochondrial (222 aa).

4Fe-4S ferredoxin-type domains are found at residues 114–143 and 153–182; these read RRYP…IEAE and TRYD…EGPN. [4Fe-4S] cluster is bound by residues Cys-123, Cys-126, Cys-129, Cys-133, Cys-162, Cys-165, Cys-168, and Cys-172.

Belongs to the complex I 23 kDa subunit family. In terms of assembly, complex I is composed of at least 49 different subunits. This is a component of the iron-sulfur (IP) fragment of the enzyme. The cofactor is [4Fe-4S] cluster.

The protein localises to the mitochondrion. It carries out the reaction a ubiquinone + NADH + 5 H(+)(in) = a ubiquinol + NAD(+) + 4 H(+)(out). Its function is as follows. Core subunit of the mitochondrial membrane respiratory chain NADH dehydrogenase (Complex I) that is believed to belong to the minimal assembly required for catalysis. Complex I functions in the transfer of electrons from NADH to the respiratory chain. The immediate electron acceptor for the enzyme is believed to be ubiquinone. May donate electrons to ubiquinone. The polypeptide is NADH dehydrogenase [ubiquinone] iron-sulfur protein 8-A, mitochondrial (Arabidopsis thaliana (Mouse-ear cress)).